The primary structure comprises 99 residues: Transcription and mRNA export factor SUS1 (99 aa).

This sequence belongs to the ENY2 family. As to quaternary structure, component of the nuclear pore complex (NPC)-associated TREX-2 complex (transcription and export complex 2), composed of at least SUS1, SAC3, THP1, SEM1, and CDC31. TREX-2 contains 2 SUS1 chains. The TREX-2 complex interacts with the nucleoporin NUP1. Component of the 1.8 MDa SAGA transcription coactivator-HAT complex. SAGA is built of 5 distinct domains with specialized functions. Within the SAGA complex, SUS1, SGF11, SGF73 and UBP8 form an additional subcomplex of SAGA called the DUB module (deubiquitination module). Interacts directly with THP1, SAC3, SGF11, and with the RNA polymerase II.

Its subcellular location is the nucleus. The protein localises to the nucleoplasm. It localises to the cytoplasm. The protein resides in the P-body. Functionally, involved in mRNA export coupled transcription activation by association with both the TREX-2 and the SAGA complexes. At the promoters, SAGA is required for recruitment of the basal transcription machinery. It influences RNA polymerase II transcriptional activity through different activities such as TBP interaction and promoter selectivity, interaction with transcription activators, and chromatin modification through histone acetylation and deubiquitination. Within the SAGA complex, participates in a subcomplex required for deubiquitination of H2B and for the maintenance of steady-state H3 methylation levels. The TREX-2 complex functions in docking export-competent ribonucleoprotein particles (mRNPs) to the nuclear entrance of the nuclear pore complex (nuclear basket). TREX-2 participates in mRNA export and accurate chromatin positioning in the nucleus by tethering genes to the nuclear periphery. May also be involved in cytoplasmic mRNA decay by interaction with components of P-bodies. In Eremothecium gossypii (strain ATCC 10895 / CBS 109.51 / FGSC 9923 / NRRL Y-1056) (Yeast), this protein is Transcription and mRNA export factor SUS1.